Consider the following 746-residue polypeptide: NAD(P)H-quinone oxidoreductase subunit 5, chloroplastic (746 aa).

15 helical membrane-spanning segments follow: residues 9–29 (WIIP…LLLV), 40–60 (WTFP…NLSI), 89–109 (IDPL…MVLI), 122–139 (LRFF…LGLV), 147–167 (IYIF…FWFT), 185–205 (GDFG…SFEF), 219–239 (NGVN…GAVA), 258–278 (TPIS…FLVA), 280–300 (LLPL…IGVI), 327–347 (LGYI…FHLI), 396–416 (TTFL…CFWS), 425–445 (WLYS…TAFY), 546–566 (LLPL…GIPF), 605–625 (IYSV…YGSI), and 722–742 (YLFV…FYFF).

The protein belongs to the complex I subunit 5 family. In terms of assembly, NDH is composed of at least 16 different subunits, 5 of which are encoded in the nucleus.

The protein resides in the plastid. The protein localises to the chloroplast thylakoid membrane. The catalysed reaction is a plastoquinone + NADH + (n+1) H(+)(in) = a plastoquinol + NAD(+) + n H(+)(out). It catalyses the reaction a plastoquinone + NADPH + (n+1) H(+)(in) = a plastoquinol + NADP(+) + n H(+)(out). In terms of biological role, NDH shuttles electrons from NAD(P)H:plastoquinone, via FMN and iron-sulfur (Fe-S) centers, to quinones in the photosynthetic chain and possibly in a chloroplast respiratory chain. The immediate electron acceptor for the enzyme in this species is believed to be plastoquinone. Couples the redox reaction to proton translocation, and thus conserves the redox energy in a proton gradient. This is NAD(P)H-quinone oxidoreductase subunit 5, chloroplastic (ndhF) from Calycanthus floridus var. glaucus (Eastern sweetshrub).